Reading from the N-terminus, the 267-residue chain is Phosphatidylserine decarboxylase proenzyme (267 aa).

Catalysis depends on charge relay system; for autoendoproteolytic cleavage activity residues Asp-78, His-132, and Ser-236. Ser-236 serves as the catalytic Schiff-base intermediate with substrate; via pyruvic acid; for decarboxylase activity. Ser-236 carries the pyruvic acid (Ser); by autocatalysis modification.

Belongs to the phosphatidylserine decarboxylase family. PSD-B subfamily. Prokaryotic type I sub-subfamily. As to quaternary structure, heterodimer of a large membrane-associated beta subunit and a small pyruvoyl-containing alpha subunit. The cofactor is pyruvate. Post-translationally, is synthesized initially as an inactive proenzyme. Formation of the active enzyme involves a self-maturation process in which the active site pyruvoyl group is generated from an internal serine residue via an autocatalytic post-translational modification. Two non-identical subunits are generated from the proenzyme in this reaction, and the pyruvate is formed at the N-terminus of the alpha chain, which is derived from the carboxyl end of the proenzyme. The autoendoproteolytic cleavage occurs by a canonical serine protease mechanism, in which the side chain hydroxyl group of the serine supplies its oxygen atom to form the C-terminus of the beta chain, while the remainder of the serine residue undergoes an oxidative deamination to produce ammonia and the pyruvoyl prosthetic group on the alpha chain. During this reaction, the Ser that is part of the protease active site of the proenzyme becomes the pyruvoyl prosthetic group, which constitutes an essential element of the active site of the mature decarboxylase.

It is found in the cell membrane. It catalyses the reaction a 1,2-diacyl-sn-glycero-3-phospho-L-serine + H(+) = a 1,2-diacyl-sn-glycero-3-phosphoethanolamine + CO2. The protein operates within phospholipid metabolism; phosphatidylethanolamine biosynthesis; phosphatidylethanolamine from CDP-diacylglycerol: step 2/2. In terms of biological role, catalyzes the formation of phosphatidylethanolamine (PtdEtn) from phosphatidylserine (PtdSer). The protein is Phosphatidylserine decarboxylase proenzyme of Helicobacter pylori (strain ATCC 700392 / 26695) (Campylobacter pylori).